The primary structure comprises 432 residues: Tyrosine--tRNA ligase (432 aa).

A 'HIGH' region motif is present at residues 46–55 (PTRPDLHLGH). The 'KMSKS' region motif lies at 232-236 (KMSKS). Lysine 235 lines the ATP pocket. Residues 369–430 (IWVARLFTLA…GKDRFVRVRL (62 aa)) form the S4 RNA-binding domain.

The protein belongs to the class-I aminoacyl-tRNA synthetase family. TyrS type 2 subfamily. Homodimer.

The protein localises to the cytoplasm. It carries out the reaction tRNA(Tyr) + L-tyrosine + ATP = L-tyrosyl-tRNA(Tyr) + AMP + diphosphate + H(+). Functionally, catalyzes the attachment of tyrosine to tRNA(Tyr) in a two-step reaction: tyrosine is first activated by ATP to form Tyr-AMP and then transferred to the acceptor end of tRNA(Tyr). In Thermus thermophilus (strain ATCC BAA-163 / DSM 7039 / HB27), this protein is Tyrosine--tRNA ligase.